An 84-amino-acid polypeptide reads, in one-letter code: Large ribosomal subunit protein bL27 (84 aa).

Residues 1–20 (MAHKKGGGSTKNGRDSNPKY) are disordered.

The protein belongs to the bacterial ribosomal protein bL27 family.

This Prosthecochloris vibrioformis (Chlorobium vibrioforme) protein is Large ribosomal subunit protein bL27 (rpmA).